Consider the following 182-residue polypeptide: NAD(P)H-quinone oxidoreductase subunit I, chloroplastic (182 aa).

4Fe-4S ferredoxin-type domains lie at 55–84 (GRIH…VDWK) and 95–124 (LNYS…MTEE). [4Fe-4S] cluster is bound by residues C64, C67, C70, C74, C104, C107, C110, and C114.

The protein belongs to the complex I 23 kDa subunit family. As to quaternary structure, NDH is composed of at least 16 different subunits, 5 of which are encoded in the nucleus. The cofactor is [4Fe-4S] cluster.

It is found in the plastid. The protein localises to the chloroplast thylakoid membrane. The catalysed reaction is a plastoquinone + NADH + (n+1) H(+)(in) = a plastoquinol + NAD(+) + n H(+)(out). It catalyses the reaction a plastoquinone + NADPH + (n+1) H(+)(in) = a plastoquinol + NADP(+) + n H(+)(out). Functionally, NDH shuttles electrons from NAD(P)H:plastoquinone, via FMN and iron-sulfur (Fe-S) centers, to quinones in the photosynthetic chain and possibly in a chloroplast respiratory chain. The immediate electron acceptor for the enzyme in this species is believed to be plastoquinone. Couples the redox reaction to proton translocation, and thus conserves the redox energy in a proton gradient. The chain is NAD(P)H-quinone oxidoreductase subunit I, chloroplastic from Buxus microphylla (Littleleaf boxwood).